Reading from the N-terminus, the 337-residue chain is Casein kinase II subunit alpha (337 aa).

The Protein kinase domain maps to Tyr-47 to Phe-332. Residues Ile-53 to Val-61 and Lys-76 contribute to the ATP site. The active-site Proton acceptor is Asp-164.

The protein belongs to the protein kinase superfamily. CMGC Ser/Thr protein kinase family. CK2 subfamily. Tetramer of two alpha and two beta chains.

It carries out the reaction L-seryl-[protein] + ATP = O-phospho-L-seryl-[protein] + ADP + H(+). The enzyme catalyses L-threonyl-[protein] + ATP = O-phospho-L-threonyl-[protein] + ADP + H(+). Its function is as follows. Casein kinases are operationally defined by their preferential utilization of acidic proteins such as caseins as substrates. The alpha chain contains the catalytic site. This Dictyostelium discoideum (Social amoeba) protein is Casein kinase II subunit alpha (casK).